The following is a 352-amino-acid chain: Ion-translocating oxidoreductase complex subunit D (352 aa).

The next 5 membrane-spanning stretches (helical) occupy residues 20-40 (IMLLVLLAAVPGIAAQLWFFG), 42-62 (GTLVQILLASVSALLAEALVL), 78-109 (ALLTGLLLAVSIPPLAPWWMVVLGTVFAVIIA), 123-143 (PAMIGYVVLLISFPVQMTSWL), and 148-168 (IAVNIPGFIDAIQVIFSGHIT). Residue Thr-187 is modified to FMN phosphoryl threonine. Helical transmembrane passes span 215–235 (LAGVGWQWVNLAWLAGGVWLL), 242–262 (WHIPLSFLVTLALCATLGWLF), 267–287 (LAAPQIHLLSGATMLGAFFIL), 301–321 (LIFGALAGLLVWLIRSFGGYP), and 322–342 (DGVAFAVLLANITVPLIDYYT).

This sequence belongs to the NqrB/RnfD family. In terms of assembly, the complex is composed of six subunits: RsxA, RsxB, RsxC, RsxD, RsxE and RsxG. It depends on FMN as a cofactor.

It localises to the cell inner membrane. Part of a membrane-bound complex that couples electron transfer with translocation of ions across the membrane. Required to maintain the reduced state of SoxR. The polypeptide is Ion-translocating oxidoreductase complex subunit D (Escherichia coli (strain SMS-3-5 / SECEC)).